The chain runs to 1723 residues: Lymphocyte antigen 75 (1723 aa).

The first 27 residues, 1–27, serve as a signal peptide directing secretion; the sequence is MRTGRVTPGLAAGLLLLLLRSFGLVEP. The Extracellular segment spans residues 28 to 1667; the sequence is SESSGNDPFT…AVCKIPLSPD (1640 aa). Residues 33–182 enclose the Ricin B-type lectin domain; that stretch reads NDPFTIVHEN…FLIGETWYHD (150 aa). An N-linked (GlcNAc...) asparagine glycan is attached at asparagine 135. The Fibronectin type-II domain maps to 164–211; it reads SYGRPCEFPFLIGETWYHDCIHDEDHSGPWCATTLSYEYDQKWGICLL. Cystine bridges form between cysteine 169/cysteine 194, cysteine 183/cysteine 209, cysteine 247/cysteine 340, and cysteine 317/cysteine 332. Residues 225–341 enclose the C-type lectin 1 domain; it reads QIGSCYQFNN…CESQQPYVCK (117 aa). 2 N-linked (GlcNAc...) asparagine glycosylation sites follow: asparagine 345 and asparagine 377. 3 C-type lectin domains span residues 368-486, 493-625, and 652-791; these read NNGF…YVCK, KDAE…ICKK, and SSLS…WVCQ. Disulfide bonds link cysteine 389–cysteine 485 and cysteine 462–cysteine 477. The N-linked (GlcNAc...) asparagine glycan is linked to asparagine 529. 3 cysteine pairs are disulfide-bonded: cysteine 597-cysteine 614, cysteine 678-cysteine 790, and cysteine 752-cysteine 782. Residues asparagine 843 and asparagine 865 are each glycosylated (N-linked (GlcNAc...) asparagine). Residue tyrosine 934 is modified to Phosphotyrosine. N-linked (GlcNAc...) asparagine glycans are attached at residues asparagine 935, asparagine 1077, and asparagine 1104. Positions 959–1092 constitute a C-type lectin 5 domain; it reads FQNKCFLKVN…ERHSLSLCQK (134 aa). A disulfide bridge links cysteine 1061 with cysteine 1081. A C-type lectin 6 domain is found at 1111-1223; sequence YLNNLYKIIS…DNQPGAICYY (113 aa). Cysteine 1198 and cysteine 1212 form a disulfide bridge. Asparagine 1226, asparagine 1321, and asparagine 1393 each carry an N-linked (GlcNAc...) asparagine glycan. One can recognise a C-type lectin 7 domain in the interval 1252–1375; sequence FQNSCYNFMI…VIEETLHFYQ (124 aa). C-type lectin domains lie at 1402–1514 and 1543–1662; these read YKDG…ICYK and YGGH…VCKI. Cysteine 1489 and cysteine 1503 are oxidised to a cystine. N-linked (GlcNAc...) asparagine glycosylation is found at asparagine 1594 and asparagine 1627. A disulfide bond links cysteine 1636 and cysteine 1651. A helical transmembrane segment spans residues 1668–1692; sequence YTGIAILFAVLCLLGLISLAIWFLL. Over 1693 to 1723 the chain is Cytoplasmic; the sequence is QRSHIRWTGFSSVRYEHGTNEDEVMLPSFHD. Serine 1704 and serine 1720 each carry phosphoserine.

N-glycosylated. In terms of tissue distribution, expressed in dendritic and thymic epithelial cells and lymph nodes.

Its subcellular location is the membrane. Acts as an endocytic receptor to direct captured antigens from the extracellular space to a specialized antigen-processing compartment. Causes reduced proliferation of B lymphocytes. This Mus musculus (Mouse) protein is Lymphocyte antigen 75 (Ly75).